We begin with the raw amino-acid sequence, 311 residues long: Acetyl-coenzyme A carboxylase carboxyl transferase subunit alpha (311 aa).

Residues 36 to 286 (NLEKETQKVY…SDYVLKAIEE (251 aa)) enclose the CoA carboxyltransferase C-terminal domain.

It belongs to the AccA family. Acetyl-CoA carboxylase is a heterohexamer composed of biotin carboxyl carrier protein (AccB), biotin carboxylase (AccC) and two subunits each of ACCase subunit alpha (AccA) and ACCase subunit beta (AccD).

The protein resides in the cytoplasm. It carries out the reaction N(6)-carboxybiotinyl-L-lysyl-[protein] + acetyl-CoA = N(6)-biotinyl-L-lysyl-[protein] + malonyl-CoA. The protein operates within lipid metabolism; malonyl-CoA biosynthesis; malonyl-CoA from acetyl-CoA: step 1/1. Functionally, component of the acetyl coenzyme A carboxylase (ACC) complex. First, biotin carboxylase catalyzes the carboxylation of biotin on its carrier protein (BCCP) and then the CO(2) group is transferred by the carboxyltransferase to acetyl-CoA to form malonyl-CoA. The sequence is that of Acetyl-coenzyme A carboxylase carboxyl transferase subunit alpha from Campylobacter lari (strain RM2100 / D67 / ATCC BAA-1060).